The primary structure comprises 356 residues: DNA polymerase IV (356 aa).

The UmuC domain maps to 7–188 (IIHIDMDAFY…IPVTKFYGVG (182 aa)). Residues aspartate 11 and aspartate 106 each coordinate Mg(2+). The active site involves glutamate 107.

The protein belongs to the DNA polymerase type-Y family. In terms of assembly, monomer. It depends on Mg(2+) as a cofactor.

Its subcellular location is the cytoplasm. The catalysed reaction is DNA(n) + a 2'-deoxyribonucleoside 5'-triphosphate = DNA(n+1) + diphosphate. Its function is as follows. Poorly processive, error-prone DNA polymerase involved in untargeted mutagenesis. Copies undamaged DNA at stalled replication forks, which arise in vivo from mismatched or misaligned primer ends. These misaligned primers can be extended by PolIV. Exhibits no 3'-5' exonuclease (proofreading) activity. May be involved in translesional synthesis, in conjunction with the beta clamp from PolIII. The protein is DNA polymerase IV of Listeria welshimeri serovar 6b (strain ATCC 35897 / DSM 20650 / CCUG 15529 / CIP 8149 / NCTC 11857 / SLCC 5334 / V8).